Reading from the N-terminus, the 302-residue chain is N-acetylmuramic acid 6-phosphate etherase (302 aa).

The SIS domain maps to 55–218 (AYPKFDQGGR…STGIMVKSGK (164 aa)). E83 acts as the Proton donor in catalysis. E114 is an active-site residue.

The protein belongs to the GCKR-like family. MurNAc-6-P etherase subfamily. Homodimer.

The catalysed reaction is N-acetyl-D-muramate 6-phosphate + H2O = N-acetyl-D-glucosamine 6-phosphate + (R)-lactate. The protein operates within amino-sugar metabolism; N-acetylmuramate degradation. Specifically catalyzes the cleavage of the D-lactyl ether substituent of MurNAc 6-phosphate, producing GlcNAc 6-phosphate and D-lactate. This chain is N-acetylmuramic acid 6-phosphate etherase, found in Levilactobacillus brevis (strain ATCC 367 / BCRC 12310 / CIP 105137 / JCM 1170 / LMG 11437 / NCIMB 947 / NCTC 947) (Lactobacillus brevis).